The primary structure comprises 1298 residues: Phosphoribosylformylglycinamidine synthase (1298 aa).

The disordered stretch occupies residues 303-327 (FPGAATGSGGEIRDEGATGRGAKPK). ATP-binding positions include 305-316 (GAATGSGGEIRD), 384-386 (TGY), and A676. Mg(2+)-binding residues include D677, E716, N720, and D884. S886 contacts ATP. The 254-residue stretch at 1045–1298 (VAVLREQGVN…MFRNARAWVN (254 aa)) folds into the Glutamine amidotransferase type-1 domain. C1138 (nucleophile) is an active-site residue. Residues H1263 and E1265 contribute to the active site.

It in the N-terminal section; belongs to the FGAMS family. As to quaternary structure, monomer.

Its subcellular location is the cytoplasm. The enzyme catalyses N(2)-formyl-N(1)-(5-phospho-beta-D-ribosyl)glycinamide + L-glutamine + ATP + H2O = 2-formamido-N(1)-(5-O-phospho-beta-D-ribosyl)acetamidine + L-glutamate + ADP + phosphate + H(+). It participates in purine metabolism; IMP biosynthesis via de novo pathway; 5-amino-1-(5-phospho-D-ribosyl)imidazole from N(2)-formyl-N(1)-(5-phospho-D-ribosyl)glycinamide: step 1/2. Phosphoribosylformylglycinamidine synthase involved in the purines biosynthetic pathway. Catalyzes the ATP-dependent conversion of formylglycinamide ribonucleotide (FGAR) and glutamine to yield formylglycinamidine ribonucleotide (FGAM) and glutamate. The polypeptide is Phosphoribosylformylglycinamidine synthase (Pseudomonas syringae pv. tomato (strain ATCC BAA-871 / DC3000)).